Here is a 448-residue protein sequence, read N- to C-terminus: Trigger factor (448 aa).

Positions Gly-172–Pro-257 constitute a PPIase FKBP-type domain.

It belongs to the FKBP-type PPIase family. Tig subfamily.

It localises to the cytoplasm. The catalysed reaction is [protein]-peptidylproline (omega=180) = [protein]-peptidylproline (omega=0). Its function is as follows. Involved in protein export. Acts as a chaperone by maintaining the newly synthesized protein in an open conformation. Functions as a peptidyl-prolyl cis-trans isomerase. The protein is Trigger factor of Burkholderia vietnamiensis (strain G4 / LMG 22486) (Burkholderia cepacia (strain R1808)).